The primary structure comprises 180 residues: ATP synthase subunit delta (180 aa).

This sequence belongs to the ATPase delta chain family. F-type ATPases have 2 components, F(1) - the catalytic core - and F(0) - the membrane proton channel. F(1) has five subunits: alpha(3), beta(3), gamma(1), delta(1), epsilon(1). F(0) has three main subunits: a(1), b(2) and c(10-14). The alpha and beta chains form an alternating ring which encloses part of the gamma chain. F(1) is attached to F(0) by a central stalk formed by the gamma and epsilon chains, while a peripheral stalk is formed by the delta and b chains.

The protein localises to the cell membrane. In terms of biological role, f(1)F(0) ATP synthase produces ATP from ADP in the presence of a proton or sodium gradient. F-type ATPases consist of two structural domains, F(1) containing the extramembraneous catalytic core and F(0) containing the membrane proton channel, linked together by a central stalk and a peripheral stalk. During catalysis, ATP synthesis in the catalytic domain of F(1) is coupled via a rotary mechanism of the central stalk subunits to proton translocation. Functionally, this protein is part of the stalk that links CF(0) to CF(1). It either transmits conformational changes from CF(0) to CF(1) or is implicated in proton conduction. The polypeptide is ATP synthase subunit delta (Leuconostoc mesenteroides subsp. mesenteroides (strain ATCC 8293 / DSM 20343 / BCRC 11652 / CCM 1803 / JCM 6124 / NCDO 523 / NBRC 100496 / NCIMB 8023 / NCTC 12954 / NRRL B-1118 / 37Y)).